A 478-amino-acid chain; its full sequence is Proline--tRNA ligase (478 aa).

The protein belongs to the class-II aminoacyl-tRNA synthetase family. ProS type 3 subfamily. Homodimer.

Its subcellular location is the cytoplasm. It catalyses the reaction tRNA(Pro) + L-proline + ATP = L-prolyl-tRNA(Pro) + AMP + diphosphate. Its function is as follows. Catalyzes the attachment of proline to tRNA(Pro) in a two-step reaction: proline is first activated by ATP to form Pro-AMP and then transferred to the acceptor end of tRNA(Pro). The chain is Proline--tRNA ligase from Ignicoccus hospitalis (strain KIN4/I / DSM 18386 / JCM 14125).